The sequence spans 214 residues: Probable transaldolase (214 aa).

The active-site Schiff-base intermediate with substrate is the Lys-83.

Belongs to the transaldolase family. Type 3B subfamily.

Its subcellular location is the cytoplasm. It catalyses the reaction D-sedoheptulose 7-phosphate + D-glyceraldehyde 3-phosphate = D-erythrose 4-phosphate + beta-D-fructose 6-phosphate. Its pathway is carbohydrate degradation; pentose phosphate pathway; D-glyceraldehyde 3-phosphate and beta-D-fructose 6-phosphate from D-ribose 5-phosphate and D-xylulose 5-phosphate (non-oxidative stage): step 2/3. Functionally, transaldolase is important for the balance of metabolites in the pentose-phosphate pathway. This chain is Probable transaldolase, found in Dictyoglomus turgidum (strain DSM 6724 / Z-1310).